Reading from the N-terminus, the 199-residue chain is uncharacterized protein (199 aa).

3 helical membrane passes run V22–L44, T65–L87, and H91–W108.

The protein belongs to the ycf1 family.

It localises to the mitochondrion membrane. This is an uncharacterized protein from Arabidopsis thaliana (Mouse-ear cress).